We begin with the raw amino-acid sequence, 72 residues long: Translation initiation factor IF-1 (72 aa).

The 72-residue stretch at methionine 1 to lysine 72 folds into the S1-like domain.

It belongs to the IF-1 family. Component of the 30S ribosomal translation pre-initiation complex which assembles on the 30S ribosome in the order IF-2 and IF-3, IF-1 and N-formylmethionyl-tRNA(fMet); mRNA recruitment can occur at any time during PIC assembly.

The protein resides in the cytoplasm. Functionally, one of the essential components for the initiation of protein synthesis. Stabilizes the binding of IF-2 and IF-3 on the 30S subunit to which N-formylmethionyl-tRNA(fMet) subsequently binds. Helps modulate mRNA selection, yielding the 30S pre-initiation complex (PIC). Upon addition of the 50S ribosomal subunit IF-1, IF-2 and IF-3 are released leaving the mature 70S translation initiation complex. This Francisella tularensis subsp. tularensis (strain FSC 198) protein is Translation initiation factor IF-1.